We begin with the raw amino-acid sequence, 349 residues long: MQIEKKDIRALSKDQLRDFFVANNDKAFRGNQVYEWLWSKGAHSFEDMTNVAKTTRSMLEENFVINHIKVDTMQRSNDGTVKNAVRLHDGLVVESVLIPTETRTTACVSSQVGCSLDCNFCATARLKRMRNLEPGEIYDQIMAIDKESRLYHNHPLSNIVFMGMGEPLMNYNNVIKAIDMVTSEEGLGMSPKRITLSTSGIPKMIKKMADDDVKFRLAVSLHSAIDETRAKIMPFSKNFPLKDLREALEYWYRKTKSKVSYEYVVWKGINDDKASVDALVKFCKYVPCKVNLIEYNPIDDGEFQQASEESILAYIKALENIGVVVKVRRSRGKDIDAACGQLANKEAEV.

E94 serves as the catalytic Proton acceptor. Positions T100–D334 constitute a Radical SAM core domain. An intrachain disulfide couples C107 to C339. [4Fe-4S] cluster is bound by residues C114, C118, and C121. Residues G165 to E166, S197, S220 to H222, and N296 contribute to the S-adenosyl-L-methionine site. The active-site S-methylcysteine intermediate is C339.

This sequence belongs to the radical SAM superfamily. RlmN family. It depends on [4Fe-4S] cluster as a cofactor.

Its subcellular location is the cytoplasm. The catalysed reaction is adenosine(2503) in 23S rRNA + 2 reduced [2Fe-2S]-[ferredoxin] + 2 S-adenosyl-L-methionine = 2-methyladenosine(2503) in 23S rRNA + 5'-deoxyadenosine + L-methionine + 2 oxidized [2Fe-2S]-[ferredoxin] + S-adenosyl-L-homocysteine. It catalyses the reaction adenosine(37) in tRNA + 2 reduced [2Fe-2S]-[ferredoxin] + 2 S-adenosyl-L-methionine = 2-methyladenosine(37) in tRNA + 5'-deoxyadenosine + L-methionine + 2 oxidized [2Fe-2S]-[ferredoxin] + S-adenosyl-L-homocysteine. Functionally, specifically methylates position 2 of adenine 2503 in 23S rRNA and position 2 of adenine 37 in tRNAs. The polypeptide is Probable dual-specificity RNA methyltransferase RlmN (Flavobacterium johnsoniae (strain ATCC 17061 / DSM 2064 / JCM 8514 / BCRC 14874 / CCUG 350202 / NBRC 14942 / NCIMB 11054 / UW101) (Cytophaga johnsonae)).